A 448-amino-acid chain; its full sequence is Probable glycine dehydrogenase (decarboxylating) subunit 1 (448 aa).

It belongs to the GcvP family. N-terminal subunit subfamily. The glycine cleavage system is composed of four proteins: P, T, L and H. In this organism, the P 'protein' is a heterodimer of two subunits.

It carries out the reaction N(6)-[(R)-lipoyl]-L-lysyl-[glycine-cleavage complex H protein] + glycine + H(+) = N(6)-[(R)-S(8)-aminomethyldihydrolipoyl]-L-lysyl-[glycine-cleavage complex H protein] + CO2. In terms of biological role, the glycine cleavage system catalyzes the degradation of glycine. The P protein binds the alpha-amino group of glycine through its pyridoxal phosphate cofactor; CO(2) is released and the remaining methylamine moiety is then transferred to the lipoamide cofactor of the H protein. In Anoxybacillus flavithermus (strain DSM 21510 / WK1), this protein is Probable glycine dehydrogenase (decarboxylating) subunit 1.